The primary structure comprises 398 residues: uncharacterized protein (398 aa).

This sequence belongs to the class-V pyridoxal-phosphate-dependent aminotransferase family. In terms of assembly, homodimer.

Functionally, is essential for optimal growth. This is an uncharacterized protein from Mycobacterium tuberculosis (strain CDC 1551 / Oshkosh).